A 170-amino-acid polypeptide reads, in one-letter code: Probable host range protein 2 (170 aa).

The interval 145–170 is disordered; it reads SDSDSDVDDRAELHKRNNDSDSDDYT. The span at 152-163 shows a compositional bias: basic and acidic residues; that stretch reads DDRAELHKRNND.

This sequence belongs to the poxviridae C7 protein family.

Functionally, plays a role for multiplication of the virus in different cell types. This is Probable host range protein 2 from Bos taurus (Bovine).